The primary structure comprises 340 residues: Protein-arginine kinase (340 aa).

Residues 21-242 enclose the Phosphagen kinase C-terminal domain; that stretch reads VVLSSRIRLA…EQIIMQERVA (222 aa). Residues 24–28, His79, Arg113, 164–168, and 195–200 each bind ATP; these read SSRIR, RASVM, and RGIYGE.

It belongs to the ATP:guanido phosphotransferase family.

It catalyses the reaction L-arginyl-[protein] + ATP = N(omega)-phospho-L-arginyl-[protein] + ADP + H(+). Catalyzes the specific phosphorylation of arginine residues in proteins. The chain is Protein-arginine kinase from Listeria monocytogenes serotype 4b (strain CLIP80459).